Consider the following 994-residue polypeptide: Phosphoenolpyruvate carboxylase (994 aa).

The segment at 1–67 (MKAVRSDKTT…GRTREDKDHP (67 aa)) is disordered. 2 stretches are compositionally biased toward low complexity: residues 9-24 (TTQA…PAKA) and 34-57 (AAPQ…PKAN). Residues His-204 and Lys-646 contribute to the active site.

Belongs to the PEPCase type 1 family. Requires Mg(2+) as cofactor.

The enzyme catalyses oxaloacetate + phosphate = phosphoenolpyruvate + hydrogencarbonate. Forms oxaloacetate, a four-carbon dicarboxylic acid source for the tricarboxylic acid cycle. This is Phosphoenolpyruvate carboxylase from Paraburkholderia xenovorans (strain LB400).